The chain runs to 431 residues: Peptidase B (431 aa).

Mn(2+)-binding residues include Lys196 and Asp201. The active site involves Lys208. Mn(2+) is bound by residues Asp219, Asp278, and Glu280. Arg282 is an active-site residue.

This sequence belongs to the peptidase M17 family. Homohexamer. Requires Mn(2+) as cofactor.

Its subcellular location is the cytoplasm. It catalyses the reaction Release of an N-terminal amino acid, Xaa, from a peptide or arylamide. Xaa is preferably Glu or Asp but may be other amino acids, including Leu, Met, His, Cys and Gln.. Its function is as follows. Probably plays an important role in intracellular peptide degradation. The protein is Peptidase B of Vibrio atlanticus (strain LGP32) (Vibrio splendidus (strain Mel32)).